Here is a 347-residue protein sequence, read N- to C-terminus: Succinylglutamate desuccinylase (347 aa).

Zn(2+) contacts are provided by H64, E67, and H159. The active site involves E222.

This sequence belongs to the AspA/AstE family. Succinylglutamate desuccinylase subfamily. Zn(2+) serves as cofactor.

It carries out the reaction N-succinyl-L-glutamate + H2O = L-glutamate + succinate. It participates in amino-acid degradation; L-arginine degradation via AST pathway; L-glutamate and succinate from L-arginine: step 5/5. Functionally, transforms N(2)-succinylglutamate into succinate and glutamate. In Burkholderia cenocepacia (strain ATCC BAA-245 / DSM 16553 / LMG 16656 / NCTC 13227 / J2315 / CF5610) (Burkholderia cepacia (strain J2315)), this protein is Succinylglutamate desuccinylase.